Consider the following 158-residue polypeptide: uncharacterized protein (158 aa).

The protein localises to the mitochondrion. This is an uncharacterized protein from Arabidopsis thaliana (Mouse-ear cress).